A 90-amino-acid chain; its full sequence is Lectin-1 (90 aa).

Q1 bears the Pyrrolidone carboxylic acid mark. A disulfide bridge links C46 with C71.

Post-translationally, the N-terminus is blocked. Contains seven disulfide bonds. In terms of processing, proteolytically cleaved. Major mature form may consist of cleaved, disulfide-bonded N-terminal and C-terminal chains.

Lectin with specificity for complex N-linked glycans and O-linked glycans. Has hemagglutinating activity towards rabbit erythrocytes. This is Lectin-1 from Hypnea musciformis (Red alga).